A 296-amino-acid chain; its full sequence is Bifunctional protein FolD (296 aa).

NADP(+) contacts are provided by residues 166–168 (GRS), S195, and T236.

It belongs to the tetrahydrofolate dehydrogenase/cyclohydrolase family. Homodimer.

The enzyme catalyses (6R)-5,10-methylene-5,6,7,8-tetrahydrofolate + NADP(+) = (6R)-5,10-methenyltetrahydrofolate + NADPH. It catalyses the reaction (6R)-5,10-methenyltetrahydrofolate + H2O = (6R)-10-formyltetrahydrofolate + H(+). It functions in the pathway one-carbon metabolism; tetrahydrofolate interconversion. In terms of biological role, catalyzes the oxidation of 5,10-methylenetetrahydrofolate to 5,10-methenyltetrahydrofolate and then the hydrolysis of 5,10-methenyltetrahydrofolate to 10-formyltetrahydrofolate. The chain is Bifunctional protein FolD from Dehalococcoides mccartyi (strain ATCC BAA-2266 / KCTC 15142 / 195) (Dehalococcoides ethenogenes (strain 195)).